The following is a 1192-amino-acid chain: Protein argonaute 13 (1192 aa).

The PAZ domain maps to 183–296 (TVIQFVEEFL…LPMEVCKIVE (114 aa)). Residues 472–770 (LLIVILLEVS…AASHAHCCIK (299 aa)) enclose the Piwi domain.

The protein belongs to the argonaute family. Ago subfamily.

Its function is as follows. Probably involved in the RNA silencing pathway. May bind to short RNAs such as microRNAs (miRNAs) or short interfering RNAs (siRNAs), and represses the translation of mRNAs which are complementary to them. This is Protein argonaute 13 (AGO13) from Oryza sativa subsp. japonica (Rice).